The primary structure comprises 71 residues: Small ribosomal subunit protein eS31 (71 aa).

Zn(2+)-binding residues include Cys35, Cys38, Cys53, and Cys56. The C4-type zinc finger occupies 35–56 (CPKCGAGVFMAEHLNRYACGKC).

The protein belongs to the eukaryotic ribosomal protein eS31 family. In terms of assembly, part of the 30S ribosomal subunit. Zn(2+) is required as a cofactor.

The polypeptide is Small ribosomal subunit protein eS31 (Methanococcus vannielii (strain ATCC 35089 / DSM 1224 / JCM 13029 / OCM 148 / SB)).